Consider the following 454-residue polypeptide: Trigger factor (454 aa).

One can recognise a PPIase FKBP-type domain in the interval 169–261 (GDVAIADYEG…LKELKSRELP (93 aa)).

This sequence belongs to the FKBP-type PPIase family. Tig subfamily.

The protein resides in the cytoplasm. The catalysed reaction is [protein]-peptidylproline (omega=180) = [protein]-peptidylproline (omega=0). In terms of biological role, involved in protein export. Acts as a chaperone by maintaining the newly synthesized protein in an open conformation. Functions as a peptidyl-prolyl cis-trans isomerase. This is Trigger factor from Picosynechococcus sp. (strain ATCC 27264 / PCC 7002 / PR-6) (Agmenellum quadruplicatum).